The primary structure comprises 323 residues: Digestive cysteine proteinase 2 (323 aa).

Residues 1 to 16 (MKVAVLFLCGVALAAA) form the signal peptide. Residues 17–107 (SPSWEHFKGK…FYPKKETGPQ (91 aa)) constitute a propeptide, activation peptide. 3 disulfide bridges follow: C128/C171, C162/C204, and C263/C312. The active site involves C131. Residues H270 and N290 contribute to the active site.

The protein belongs to the peptidase C1 family.

Its activity is regulated as follows. Inhibited by E-64, antipain, leupeptin, heavy metal ions, iodoacetic acid, dithionitrobenzene, p-hydroxymercuri-benzoate; activated by mercaptoethanol and dithiothreitol. This chain is Digestive cysteine proteinase 2 (LCP2), found in Homarus americanus (American lobster).